A 62-amino-acid polypeptide reads, in one-letter code: Photosystem II reaction center protein Z (62 aa).

The next 2 helical transmembrane spans lie at 8–28 (ALFALIATSFLLVVGVPVAFA) and 41–61 (FSGASLWIGLVFLVGIPNSFI).

Belongs to the PsbZ family. In terms of assembly, PSII is composed of 1 copy each of membrane proteins PsbA, PsbB, PsbC, PsbD, PsbE, PsbF, PsbH, PsbI, PsbJ, PsbK, PsbL, PsbM, PsbT, PsbY, PsbZ, Psb30/Ycf12, at least 3 peripheral proteins of the oxygen-evolving complex and a large number of cofactors. It forms dimeric complexes.

The protein resides in the plastid. It localises to the chloroplast thylakoid membrane. May control the interaction of photosystem II (PSII) cores with the light-harvesting antenna, regulates electron flow through the 2 photosystem reaction centers. PSII is a light-driven water plastoquinone oxidoreductase, using light energy to abstract electrons from H(2)O, generating a proton gradient subsequently used for ATP formation. This is Photosystem II reaction center protein Z from Adiantum capillus-veneris (Maidenhair fern).